The sequence spans 354 residues: Thymidylate synthase (354 aa).

Positions 1-32 (MPAAGSEPSRPPSPPGVQEQSAEPRPPPPPHG) are disordered. Residue Arg53 coordinates dUMP. Ser117 bears the Phosphoserine mark. 178–179 (RR) is a binding site for dUMP. Cys198 acts as the Nucleophile in catalysis. Residues 218 to 221 (RSGD), Asn229, and 259 to 261 (HIY) contribute to the dUMP site. (6R)-5,10-methylene-5,6,7,8-tetrahydrofolate is bound at residue Asp221. Residue Lys349 forms a Glycyl lysine isopeptide (Lys-Gly) (interchain with G-Cter in SUMO2) linkage. (6R)-5,10-methylene-5,6,7,8-tetrahydrofolate is bound at residue Ala353.

Belongs to the thymidylate synthase family. As to quaternary structure, homodimer.

It is found in the nucleus. The protein localises to the cytoplasm. Its subcellular location is the mitochondrion. The protein resides in the mitochondrion matrix. It localises to the mitochondrion inner membrane. It catalyses the reaction dUMP + (6R)-5,10-methylene-5,6,7,8-tetrahydrofolate = 7,8-dihydrofolate + dTMP. The protein operates within pyrimidine metabolism; dTTP biosynthesis. Catalyzes the reductive methylation of 2'-deoxyuridine 5'-monophosphate (dUMP) to thymidine 5'-monophosphate (dTMP), using the cosubstrate, 5,10- methylenetetrahydrofolate (CH2H4folate) as a 1-carbon donor and reductant and contributes to the de novo mitochondrial thymidylate biosynthesis pathway. The chain is Thymidylate synthase (TYMS) from Bos taurus (Bovine).